Here is a 547-residue protein sequence, read N- to C-terminus: 4-coumarate-CoA ligase 1 (547 aa).

ATP contacts are provided by residues 190-194 (SSGTT), His238, 310-312 (AAP), 332-333 (QG), Thr337, Asp421, Arg436, and Lys527. The SBD1 stretch occupies residues 263 to 332 (EIVRLMELVE…EKLPNAKLGQ (70 aa)). The segment at 333-400 (GYGMTEAGPV…IRGNQIMKGY (68 aa)) is SBD2.

This sequence belongs to the ATP-dependent AMP-binding enzyme family. In terms of tissue distribution, mostly expressed in stems, and, to a lower extent, in bulbs.

It catalyses the reaction (E)-4-coumarate + ATP + CoA = (E)-4-coumaroyl-CoA + AMP + diphosphate. Its pathway is phytoalexin biosynthesis; 3,4',5-trihydroxystilbene biosynthesis; 3,4',5-trihydroxystilbene from trans-4-coumarate: step 1/2. In terms of biological role, produces CoA thioesters of a variety of hydroxy- and methoxy-substituted cinnamic acids, which are used to synthesize several phenylpropanoid-derived compounds, including anthocyanins, flavonoids, isoflavonoids, coumarins, lignin, suberin and wall-bound phenolics. The chain is 4-coumarate-CoA ligase 1 from Narcissus pseudonarcissus (Daffodil).